Reading from the N-terminus, the 33-residue chain is Maurocalcin (33 aa).

Cystine bridges form between C3–C17, C10–C21, and C16–C32. Positions 22 to 24 (KRR) are essential for stimulation of [3H]ryanodine binding to RYR.

It belongs to the scorpion calcin family. The non-natural D-maurocalcin (a chiral analog of maurocalcin composed of D-amino acids) completely loses the ability to stimulate [3H]ryanodine binding and calcium release. Its protease resistance, combined with its efficient cell penetration at concentrations devoid of cell toxicity, suggests that it should be an excellent vector for in vivo applications. In terms of tissue distribution, expressed by the venom gland.

The protein resides in the secreted. Its function is as follows. This toxin stabilizes ryanodine receptor 1 (RyR1) opening in a long-lasting subconductance state (48%-60% of the full conductance state). Furthermore, it triggers calcium release from sarcoplasmic vesicles (6.6 nM are enough to induce a sharp release, and 60% of the total calcium is released after toxin (100 nM) addition) probably by acting as a cell-penetrating peptide (CPP). In addition, it has been shown to dose-dependently stimulate ryanodine binding to RyR1 (EC(50)=12.5-26.4 nM). It also augments the bell-shaped calcium-[3H]ryanodine binding curve that is maximal at about 10 uM calcium concentration. It binds a different site as ryanodine. It acts synergistically with caffeine. In vivo, intracerebroventricular injection into mice causes death. In Scorpio palmatus (Israeli golden scorpion), this protein is Maurocalcin.